We begin with the raw amino-acid sequence, 352 residues long: tRNA (guanine(26)-N(2))-dimethyltransferase (352 aa).

A Trm1 methyltransferase domain is found at 4 to 350 (ILNKEGAVEF…ANYDEIARIL (347 aa)). 5 residues coordinate S-adenosyl-L-methionine: R39, R65, D83, D109, and A110.

It belongs to the class I-like SAM-binding methyltransferase superfamily. Trm1 family.

It catalyses the reaction guanosine(26) in tRNA + 2 S-adenosyl-L-methionine = N(2)-dimethylguanosine(26) in tRNA + 2 S-adenosyl-L-homocysteine + 2 H(+). Dimethylates a single guanine residue at position 26 of a number of tRNAs using S-adenosyl-L-methionine as donor of the methyl groups. The sequence is that of tRNA (guanine(26)-N(2))-dimethyltransferase from Pyrobaculum islandicum (strain DSM 4184 / JCM 9189 / GEO3).